A 700-amino-acid chain; its full sequence is Elongation factor G 2 (700 aa).

The tr-type G domain occupies 8-290 (ERYRNIGISA…AVIDFLPSPV (283 aa)). Residues 17 to 24 (AHIDAGKT), 88 to 92 (DTPGH), and 142 to 145 (NKMD) contribute to the GTP site.

It belongs to the TRAFAC class translation factor GTPase superfamily. Classic translation factor GTPase family. EF-G/EF-2 subfamily.

The protein localises to the cytoplasm. In terms of biological role, catalyzes the GTP-dependent ribosomal translocation step during translation elongation. During this step, the ribosome changes from the pre-translocational (PRE) to the post-translocational (POST) state as the newly formed A-site-bound peptidyl-tRNA and P-site-bound deacylated tRNA move to the P and E sites, respectively. Catalyzes the coordinated movement of the two tRNA molecules, the mRNA and conformational changes in the ribosome. The sequence is that of Elongation factor G 2 from Burkholderia mallei (strain ATCC 23344).